Reading from the N-terminus, the 245-residue chain is Uridylate kinase (245 aa).

12-15 (KLSG) is an ATP binding site. The tract at residues 20 to 25 (GERGVG) is involved in allosteric activation by GTP. A UMP-binding site is contributed by G54. G55 and R59 together coordinate ATP. Residues D74 and 135-142 (IGSPYFST) each bind UMP. Residues N163, Y169, and D172 each coordinate ATP.

It belongs to the UMP kinase family. As to quaternary structure, homohexamer.

Its subcellular location is the cytoplasm. It catalyses the reaction UMP + ATP = UDP + ADP. It participates in pyrimidine metabolism; CTP biosynthesis via de novo pathway; UDP from UMP (UMPK route): step 1/1. Allosterically activated by GTP. Inhibited by UTP. Functionally, catalyzes the reversible phosphorylation of UMP to UDP. The sequence is that of Uridylate kinase from Streptococcus pneumoniae serotype 2 (strain D39 / NCTC 7466).